The chain runs to 196 residues: GTP cyclohydrolase-2 (196 aa).

49 to 53 (RVHSE) contacts GTP. Residues Cys54, Cys65, and Cys67 each coordinate Zn(2+). Residues Gln70, 92-94 (EGR), and Thr114 each bind GTP. The Proton acceptor role is filled by Asp126. The active-site Nucleophile is Arg128. The GTP site is built by Thr149 and Lys154.

It belongs to the GTP cyclohydrolase II family. As to quaternary structure, homodimer. The cofactor is Zn(2+).

It catalyses the reaction GTP + 4 H2O = 2,5-diamino-6-hydroxy-4-(5-phosphoribosylamino)-pyrimidine + formate + 2 phosphate + 3 H(+). It participates in cofactor biosynthesis; riboflavin biosynthesis; 5-amino-6-(D-ribitylamino)uracil from GTP: step 1/4. In terms of biological role, catalyzes the conversion of GTP to 2,5-diamino-6-ribosylamino-4(3H)-pyrimidinone 5'-phosphate (DARP), formate and pyrophosphate. The protein is GTP cyclohydrolase-2 of Citrobacter koseri (strain ATCC BAA-895 / CDC 4225-83 / SGSC4696).